Reading from the N-terminus, the 421-residue chain is Inner membrane transport protein YdiN (421 aa).

The Cytoplasmic segment spans residues 1–9 (MSQNKAFST). The helical transmembrane segment at 10–30 (PFILAVLCIYFSYFLHGISVI) threads the bilayer. Topologically, residues 31 to 49 (TLAQNMSSLAEKFSTDNAG) are periplasmic. A helical membrane pass occupies residues 50–70 (IAYLISGIGLGRLISILFFGV). Topologically, residues 71 to 78 (ISDKFGRR) are cytoplasmic. Residues 79–99 (AVILMAVIMYLLFFFGIPACP) traverse the membrane as a helical segment. A topological domain (periplasmic) is located at residue Asn100. The helical transmembrane segment at 101 to 121 (LTLAYGLAVCVGIANSALDTG) threads the bilayer. Residues 122-136 (GYPALMECFPKASGS) lie on the Cytoplasmic side of the membrane. Residues 137–157 (AVILVKAMVSFGQMFYPMLVS) form a helical membrane-spanning segment. The Periplasmic segment spans residues 158–163 (YMLLNN). A helical membrane pass occupies residues 164–184 (IWYGYGLIIPGILFVLITLML). Residues 185 to 215 (LKSKFPSQLVDASVTNELPQMNSKPLVWLEG) are Cytoplasmic-facing. The helical transmembrane segment at 216–236 (VSSVLFGVAAFSTFYVIVVWM) threads the bilayer. At 237-251 (PKYAMAFAGMSEAEA) the chain is on the periplasmic side. Residues 252–272 (LKTISYYSMGSLVCVFIFAAL) traverse the membrane as a helical segment. Residues 273–279 (LKKMVRP) lie on the Cytoplasmic side of the membrane. The helical transmembrane segment at 280–300 (IWANVFNSALATITAAIIYLY) threads the bilayer. Topologically, residues 301–308 (PSPLVCNA) are periplasmic. The chain crosses the membrane as a helical span at residues 309–329 (GAFVIGFSAAGGILQLGVSVM). Residues 330-342 (SEFFPKSKAKVTS) are Cytoplasmic-facing. Residues 343–363 (IYMMMGGLANFVIPLITGYLS) form a helical membrane-spanning segment. Residues 364–369 (NIGLQY) lie on the Periplasmic side of the membrane. A helical membrane pass occupies residues 370-390 (IIVLDFTFALLALITAIIVFI). Topologically, residues 391–421 (RYYRVFIIPENDVRFGERKFCTRLNTIKHRG) are cytoplasmic.

Belongs to the major facilitator superfamily.

It localises to the cell inner membrane. This is Inner membrane transport protein YdiN (ydiN) from Escherichia coli (strain K12).